A 365-amino-acid chain; its full sequence is Green-sensitive opsin P521 (365 aa).

At 1-51 (MTEAWNVAVFAARRSRDDDDTTRGSVFTYTNTNNTRGPFEGPNYHIAPRWV) the chain is on the extracellular side. Asn33 carries N-linked (GlcNAc...) asparagine glycosylation. Residues 52-76 (YNLVSFFMIIVVIASCFTNGLVLVA) traverse the membrane as a helical segment. Over 77 to 88 (TAKFKKLRHPLN) the chain is Cytoplasmic. A helical transmembrane segment spans residues 89–113 (WILVNLAFVDLVETLVASTISVFNQ). Over 114–128 (IFGYFILGHPLCVIE) the chain is Extracellular. Cys125 and Cys202 are oxidised to a cystine. Residues 129–148 (GYVVSSCGITGLWSLAIISW) traverse the membrane as a helical segment. The Cytoplasmic segment spans residues 149–167 (ERWFVVCKPFGNIKFDSKL). The helical transmembrane segment at 168 to 191 (AIIGIVFSWVWAWGWSAPPIFGWS) threads the bilayer. Residues 192 to 217 (RYWPHGLKTSCGPDVFSGSVELGCQS) lie on the Extracellular side of the membrane. Residues 218–245 (FMLTLMITCCFLPLFIIIVCYLQVWMAI) traverse the membrane as a helical segment. Over 246-267 (RAVAAQQKESESTQKAEREVSR) the chain is Cytoplasmic. Residues 268–291 (MVVVMIVAFCICWGPYASFVSFAA) traverse the membrane as a helical segment. At 292 to 299 (ANPGYAFH) the chain is on the extracellular side. A helical transmembrane segment spans residues 300–324 (PLAAALPAYFAKSATIYNPVIYVFM). Position 311 is an N6-(retinylidene)lysine (Lys311). Residues 325 to 365 (NRQFRNCIMQLFGKKVDDGSEASTTSRTEVSSVSNSSVAPA) lie on the Cytoplasmic side of the membrane. The interval 342-365 (DGSEASTTSRTEVSSVSNSSVAPA) is disordered. The segment covering 345–365 (EASTTSRTEVSSVSNSSVAPA) has biased composition (low complexity).

It belongs to the G-protein coupled receptor 1 family. Opsin subfamily. Post-translationally, phosphorylated on some or all of the serine and threonine residues present in the C-terminal region. In terms of tissue distribution, in this lizard the color pigments are found in the rod-shaped photoreceptor cells which have been derived from ancestral cone-like photoreceptors.

It is found in the membrane. Visual pigments are the light-absorbing molecules that mediate vision. They consist of an apoprotein, opsin, covalently linked to cis-retinal. The sequence is that of Green-sensitive opsin P521 from Gekko gecko (Tokay gecko).